A 402-amino-acid chain; its full sequence is Acetylornithine aminotransferase (402 aa).

Pyridoxal 5'-phosphate-binding positions include 117–118 (GA) and Phe-143. Residue Arg-146 participates in N(2)-acetyl-L-ornithine binding. 231–234 (DEVQ) provides a ligand contact to pyridoxal 5'-phosphate. The residue at position 260 (Lys-260) is an N6-(pyridoxal phosphate)lysine. Thr-288 is a binding site for N(2)-acetyl-L-ornithine. Thr-289 provides a ligand contact to pyridoxal 5'-phosphate.

The protein belongs to the class-III pyridoxal-phosphate-dependent aminotransferase family. ArgD subfamily. In terms of assembly, homodimer. It depends on pyridoxal 5'-phosphate as a cofactor.

It is found in the cytoplasm. The enzyme catalyses N(2)-acetyl-L-ornithine + 2-oxoglutarate = N-acetyl-L-glutamate 5-semialdehyde + L-glutamate. It participates in amino-acid biosynthesis; L-arginine biosynthesis; N(2)-acetyl-L-ornithine from L-glutamate: step 4/4. The polypeptide is Acetylornithine aminotransferase (Corynebacterium efficiens (strain DSM 44549 / YS-314 / AJ 12310 / JCM 11189 / NBRC 100395)).